The sequence spans 254 residues: Imidazole glycerol phosphate synthase subunit HisF (254 aa).

Catalysis depends on residues Asp11 and Asp130.

This sequence belongs to the HisA/HisF family. Heterodimer of HisH and HisF.

The protein localises to the cytoplasm. The catalysed reaction is 5-[(5-phospho-1-deoxy-D-ribulos-1-ylimino)methylamino]-1-(5-phospho-beta-D-ribosyl)imidazole-4-carboxamide + L-glutamine = D-erythro-1-(imidazol-4-yl)glycerol 3-phosphate + 5-amino-1-(5-phospho-beta-D-ribosyl)imidazole-4-carboxamide + L-glutamate + H(+). It functions in the pathway amino-acid biosynthesis; L-histidine biosynthesis; L-histidine from 5-phospho-alpha-D-ribose 1-diphosphate: step 5/9. Functionally, IGPS catalyzes the conversion of PRFAR and glutamine to IGP, AICAR and glutamate. The HisF subunit catalyzes the cyclization activity that produces IGP and AICAR from PRFAR using the ammonia provided by the HisH subunit. The protein is Imidazole glycerol phosphate synthase subunit HisF of Staphylococcus carnosus (strain TM300).